A 350-amino-acid polypeptide reads, in one-letter code: Small ribosomal subunit biogenesis GTPase RsgA (350 aa).

Positions 1–17 (MSKNKLSKGQQRRVQAN) are enriched in polar residues. Residues 1 to 35 (MSKNKLSKGQQRRVQANHQRRLRTDRKPELDDSQL) are disordered. The 171-residue stretch at 103 to 273 (TSVLTRPDLY…VIDSPGVREF (171 aa)) folds into the CP-type G domain. GTP contacts are provided by residues 159–162 (NKID) and 213–221 (GQSGVGKSS). C297, C302, H304, and C310 together coordinate Zn(2+).

This sequence belongs to the TRAFAC class YlqF/YawG GTPase family. RsgA subfamily. Monomer. Associates with 30S ribosomal subunit, binds 16S rRNA. It depends on Zn(2+) as a cofactor.

It is found in the cytoplasm. In terms of biological role, one of several proteins that assist in the late maturation steps of the functional core of the 30S ribosomal subunit. Helps release RbfA from mature subunits. May play a role in the assembly of ribosomal proteins into the subunit. Circularly permuted GTPase that catalyzes slow GTP hydrolysis, GTPase activity is stimulated by the 30S ribosomal subunit. This Yersinia pseudotuberculosis serotype O:1b (strain IP 31758) protein is Small ribosomal subunit biogenesis GTPase RsgA.